Consider the following 756-residue polypeptide: Centromere protein I (756 aa).

The disordered stretch occupies residues 1 to 60 (MSPQKRVKNVQAQNRTSQGSSSFQTTLSAWKVKQDPSNSKNISKHGQNNPVGDYEHADDQ). 2 stretches are compositionally biased toward polar residues: residues 10–28 (VQAQNRTSQGSSSFQTTLS) and 35–50 (DPSNSKNISKHGQNNP).

This sequence belongs to the CENP-I/CTF3 family. Component of the CENPA-CAD complex, composed of CENPI, CENPK, CENPL, CENPO, CENPP, CENPQ, CENPR and CENPS. The CENPA-CAD complex interacts with the CENPA-NAC complex, at least composed of CENPA, CENPC, CENPH, CENPM, CENPN, CENPT and CENPU. Interacts with SENP6. Sumoylated. Sumoylated form can be polyubiquitinated by RNF4, leading to its degradation. Desumoylation by SENP6 prevents its degradation.

The protein resides in the nucleus. The protein localises to the chromosome. It is found in the centromere. In terms of biological role, component of the CENPA-CAD (nucleosome distal) complex, a complex recruited to centromeres which is involved in assembly of kinetochore proteins, mitotic progression and chromosome segregation. May be involved in incorporation of newly synthesized CENPA into centromeres via its interaction with the CENPA-NAC complex. Required for the localization of CENPF, MAD1L1 and MAD2 (MAD2L1 or MAD2L2) to kinetochores. Involved in the response of gonadal tissues to follicle-stimulating hormone. The polypeptide is Centromere protein I (CENPI) (Homo sapiens (Human)).